Consider the following 246-residue polypeptide: Probable transcriptional regulatory protein YebC (246 aa).

Residues 1-20 are disordered; that stretch reads MAGHSKWANTRHRKAAQDAK.

The protein belongs to the TACO1 family.

It is found in the cytoplasm. In Salmonella typhimurium (strain LT2 / SGSC1412 / ATCC 700720), this protein is Probable transcriptional regulatory protein YebC.